A 187-amino-acid polypeptide reads, in one-letter code: Biogenesis of lysosome-related organelles complex 1 subunit 5 (187 aa).

Positions 1 to 26 (MSGGGTETPVGCEAAPGGGSKKRDSL) are disordered. The residue at position 2 (serine 2) is an N-acetylserine. The stretch at 154 to 186 (NKRAEVDEEHRKAMERLKEQYAEMEKDLAKFST) forms a coiled coil.

This sequence belongs to the BLOC1S5 family. As to quaternary structure, interacts with BLOC1S4, DTNBP1/BLOC1S7 and PI4K2A. Component of the biogenesis of lysosome-related organelles complex 1 (BLOC-1) composed of BLOC1S1, BLOC1S2, BLOC1S3, BLOC1S4, BLOC1S5, BLOC1S6, DTNBP1/BLOC1S7 and SNAPIN/BLOC1S8. Octamer composed of one copy each BLOC1S1, BLOC1S2, BLOC1S3, BLOC1S4, BLOC1S5, BLOC1S6, DTNBP1/BLOC1S7 and SNAPIN/BLOC1S8. The BLOC-1 complex associates with the AP-3 protein complex and membrane protein cargos. Interacts with BLOC1S6.

In terms of biological role, component of the BLOC-1 complex, a complex that is required for normal biogenesis of lysosome-related organelles (LRO), such as platelet dense granules and melanosomes. In concert with the AP-3 complex, the BLOC-1 complex is required to target membrane protein cargos into vesicles assembled at cell bodies for delivery into neurites and nerve terminals. The BLOC-1 complex, in association with SNARE proteins, is also proposed to be involved in neurite extension. Plays a role in intracellular vesicle trafficking. This Homo sapiens (Human) protein is Biogenesis of lysosome-related organelles complex 1 subunit 5.